A 172-amino-acid chain; its full sequence is Protein GrpE (172 aa).

A disordered region spans residues 1-23; that stretch reads MNQDHPEFDSEDLSQNPPETDPL.

Belongs to the GrpE family. As to quaternary structure, homodimer.

The protein localises to the cytoplasm. Functionally, participates actively in the response to hyperosmotic and heat shock by preventing the aggregation of stress-denatured proteins, in association with DnaK and GrpE. It is the nucleotide exchange factor for DnaK and may function as a thermosensor. Unfolded proteins bind initially to DnaJ; upon interaction with the DnaJ-bound protein, DnaK hydrolyzes its bound ATP, resulting in the formation of a stable complex. GrpE releases ADP from DnaK; ATP binding to DnaK triggers the release of the substrate protein, thus completing the reaction cycle. Several rounds of ATP-dependent interactions between DnaJ, DnaK and GrpE are required for fully efficient folding. This is Protein GrpE from Xanthomonas axonopodis pv. citri (strain 306).